Consider the following 257-residue polypeptide: 2,3,4,5-tetrahydropyridine-2,6-dicarboxylate N-acetyltransferase (257 aa).

It belongs to the transferase hexapeptide repeat family. DapH subfamily.

It carries out the reaction (S)-2,3,4,5-tetrahydrodipicolinate + acetyl-CoA + H2O = L-2-acetamido-6-oxoheptanedioate + CoA. It functions in the pathway amino-acid biosynthesis; L-lysine biosynthesis via DAP pathway; LL-2,6-diaminopimelate from (S)-tetrahydrodipicolinate (acetylase route): step 1/3. Catalyzes the transfer of an acetyl group from acetyl-CoA to tetrahydrodipicolinate. The protein is 2,3,4,5-tetrahydropyridine-2,6-dicarboxylate N-acetyltransferase of Lactococcus lactis subsp. cremoris (strain SK11).